The sequence spans 443 residues: uncharacterized protein (443 aa).

Residues His-164 and Asp-386 each act as proton acceptor in the active site.

The protein belongs to the plant acyltransferase family.

This is an uncharacterized protein from Arabidopsis thaliana (Mouse-ear cress).